The sequence spans 188 residues: ATP-dependent protease subunit HslV (188 aa).

T7 is a catalytic residue. G162, C165, and S168 together coordinate Na(+).

The protein belongs to the peptidase T1B family. HslV subfamily. As to quaternary structure, a double ring-shaped homohexamer of HslV is capped on each side by a ring-shaped HslU homohexamer. The assembly of the HslU/HslV complex is dependent on binding of ATP.

The protein resides in the cytoplasm. It carries out the reaction ATP-dependent cleavage of peptide bonds with broad specificity.. Its activity is regulated as follows. Allosterically activated by HslU binding. In terms of biological role, protease subunit of a proteasome-like degradation complex believed to be a general protein degrading machinery. This is ATP-dependent protease subunit HslV from Thiobacillus denitrificans (strain ATCC 25259 / T1).